The primary structure comprises 374 residues: Ribonuclease D (374 aa).

The 169-residue stretch at 3–171 (YQLITTDDGL…MAIRLVEETT (169 aa)) folds into the 3'-5' exonuclease domain. In terms of domain architecture, HRDC spans 210–289 (KGRHLACLQK…AETQTMDAAE (80 aa)).

It belongs to the RNase D family. A divalent metal cation is required as a cofactor.

Its subcellular location is the cytoplasm. The enzyme catalyses Exonucleolytic cleavage that removes extra residues from the 3'-terminus of tRNA to produce 5'-mononucleotides.. In terms of biological role, exonuclease involved in the 3' processing of various precursor tRNAs. Initiates hydrolysis at the 3'-terminus of an RNA molecule and releases 5'-mononucleotides. This chain is Ribonuclease D, found in Musicola paradisiaca (strain Ech703) (Dickeya paradisiaca).